The primary structure comprises 478 residues: Putative response regulator NtrX-like (478 aa).

A Response regulatory domain is found at 5-121 (DVLIVDDEED…KLVILLKRAC (117 aa)). Asp-54 bears the 4-aspartylphosphate mark. Positions 143–372 (LVGNSTITLK…LRNVVEWTLI (230 aa)) constitute a Sigma-54 factor interaction domain. ATP contacts are provided by residues 171–178 (GKVGSGKE) and 235–244 (ANNGTLYIDE).

In terms of biological role, member of the two-component regulatory system RBE_0312/RBE_0470. This chain is Putative response regulator NtrX-like, found in Rickettsia bellii (strain RML369-C).